The primary structure comprises 427 residues: Glutamate-1-semialdehyde 2,1-aminomutase (427 aa).

The residue at position 265 (Lys265) is an N6-(pyridoxal phosphate)lysine.

It belongs to the class-III pyridoxal-phosphate-dependent aminotransferase family. HemL subfamily. As to quaternary structure, homodimer. Requires pyridoxal 5'-phosphate as cofactor.

The protein localises to the cytoplasm. It catalyses the reaction (S)-4-amino-5-oxopentanoate = 5-aminolevulinate. It participates in porphyrin-containing compound metabolism; protoporphyrin-IX biosynthesis; 5-aminolevulinate from L-glutamyl-tRNA(Glu): step 2/2. This is Glutamate-1-semialdehyde 2,1-aminomutase from Burkholderia lata (strain ATCC 17760 / DSM 23089 / LMG 22485 / NCIMB 9086 / R18194 / 383).